The following is a 210-amino-acid chain: Imidazole glycerol phosphate synthase subunit HisH (210 aa).

The region spanning 3–208 (PIAIIDYGMG…GELVRHAGNA (206 aa)) is the Glutamine amidotransferase type-1 domain. The active-site Nucleophile is cysteine 81. Active-site residues include histidine 183 and glutamate 185.

In terms of assembly, heterodimer of HisH and HisF.

Its subcellular location is the cytoplasm. The enzyme catalyses 5-[(5-phospho-1-deoxy-D-ribulos-1-ylimino)methylamino]-1-(5-phospho-beta-D-ribosyl)imidazole-4-carboxamide + L-glutamine = D-erythro-1-(imidazol-4-yl)glycerol 3-phosphate + 5-amino-1-(5-phospho-beta-D-ribosyl)imidazole-4-carboxamide + L-glutamate + H(+). It carries out the reaction L-glutamine + H2O = L-glutamate + NH4(+). It functions in the pathway amino-acid biosynthesis; L-histidine biosynthesis; L-histidine from 5-phospho-alpha-D-ribose 1-diphosphate: step 5/9. In terms of biological role, IGPS catalyzes the conversion of PRFAR and glutamine to IGP, AICAR and glutamate. The HisH subunit catalyzes the hydrolysis of glutamine to glutamate and ammonia as part of the synthesis of IGP and AICAR. The resulting ammonia molecule is channeled to the active site of HisF. This chain is Imidazole glycerol phosphate synthase subunit HisH, found in Moorella thermoacetica (strain ATCC 39073 / JCM 9320).